A 472-amino-acid chain; its full sequence is ATP synthase subunit beta (472 aa).

ATP is bound at residue 160-167; that stretch reads GGAGVGKT.

It belongs to the ATPase alpha/beta chains family. In terms of assembly, F-type ATPases have 2 components, CF(1) - the catalytic core - and CF(0) - the membrane proton channel. CF(1) has five subunits: alpha(3), beta(3), gamma(1), delta(1), epsilon(1). CF(0) has three main subunits: a(1), b(2) and c(9-12). The alpha and beta chains form an alternating ring which encloses part of the gamma chain. CF(1) is attached to CF(0) by a central stalk formed by the gamma and epsilon chains, while a peripheral stalk is formed by the delta and b chains.

The protein resides in the cell membrane. It carries out the reaction ATP + H2O + 4 H(+)(in) = ADP + phosphate + 5 H(+)(out). Its function is as follows. Produces ATP from ADP in the presence of a proton gradient across the membrane. The catalytic sites are hosted primarily by the beta subunits. This Lachnoclostridium phytofermentans (strain ATCC 700394 / DSM 18823 / ISDg) (Clostridium phytofermentans) protein is ATP synthase subunit beta.